The primary structure comprises 231 residues: 7-cyano-7-deazaguanine synthase (231 aa).

An ATP-binding site is contributed by 8–18; sequence FSGGQDSTTCL. Residues Cys188, Cys197, Cys200, and Cys203 each coordinate Zn(2+).

It belongs to the QueC family. Zn(2+) is required as a cofactor.

The catalysed reaction is 7-carboxy-7-deazaguanine + NH4(+) + ATP = 7-cyano-7-deazaguanine + ADP + phosphate + H2O + H(+). Its pathway is purine metabolism; 7-cyano-7-deazaguanine biosynthesis. Catalyzes the ATP-dependent conversion of 7-carboxy-7-deazaguanine (CDG) to 7-cyano-7-deazaguanine (preQ(0)). The polypeptide is 7-cyano-7-deazaguanine synthase (Salmonella gallinarum (strain 287/91 / NCTC 13346)).